Here is a 173-residue protein sequence, read N- to C-terminus: Shikimate kinase 1 (173 aa).

14-19 (GAGKST) is an ATP binding site. S18 provides a ligand contact to Mg(2+). Substrate contacts are provided by D36, R60, and G82. ATP is bound at residue R120. A substrate-binding site is contributed by R140. An ATP-binding site is contributed by Q157.

It belongs to the shikimate kinase family. In terms of assembly, monomer. Requires Mg(2+) as cofactor.

Its subcellular location is the cytoplasm. It carries out the reaction shikimate + ATP = 3-phosphoshikimate + ADP + H(+). It functions in the pathway metabolic intermediate biosynthesis; chorismate biosynthesis; chorismate from D-erythrose 4-phosphate and phosphoenolpyruvate: step 5/7. In terms of biological role, catalyzes the specific phosphorylation of the 3-hydroxyl group of shikimic acid using ATP as a cosubstrate. This Escherichia fergusonii (strain ATCC 35469 / DSM 13698 / CCUG 18766 / IAM 14443 / JCM 21226 / LMG 7866 / NBRC 102419 / NCTC 12128 / CDC 0568-73) protein is Shikimate kinase 1.